Here is a 485-residue protein sequence, read N- to C-terminus: MTNKIRVRYAPSPTGLLHIGNARTALFNYLYARHHGGDFIIRIEDTDRKRHVEDGERSQLENLRWLGMDWDESPETHENYRQSERLALYKKYIDQLLAEGKAYKSYVTEEELAAERERQEAAGETPRYINEFLGMSADEKAAYIAKRQAAGIVPTVRLKVNEAGIYKWHDMVKGDIEFEGGNIGGDWVIQKKDGYPTYNFAVVVDDHDMQISHVIRGDDHIANTPKQLMVYEALGWEAPAFAHMTLIINSETGKKLSKRDTNTLQFIEDYRQKGYLPEAVFNFIALLGWNPGGENEIFSRQELIELFDENRLSKSPAAFDQKKLDWMNNEYIKNADFDTIFALAKPYLESAGRLTDKAKKLVELYQPQMKSIDEIVPLTDLFFEEFPELSEEEKEFMAGETVPIVLQAFKAKLEAMSDEDFKSENIFPQIKAVQKETGIKGKNLFMPIRIAVSGEMHGPELPDTIFLLGKEKSIQHLEDMLEKLK.

The short motif at 11 to 21 (PSPTGLLHIGN) is the 'HIGH' region element. Positions 255–259 (KLSKR) match the 'KMSKS' region motif. K258 contributes to the ATP binding site.

The protein belongs to the class-I aminoacyl-tRNA synthetase family. Glutamate--tRNA ligase type 1 subfamily. Monomer.

The protein resides in the cytoplasm. The enzyme catalyses tRNA(Glu) + L-glutamate + ATP = L-glutamyl-tRNA(Glu) + AMP + diphosphate. Catalyzes the attachment of glutamate to tRNA(Glu) in a two-step reaction: glutamate is first activated by ATP to form Glu-AMP and then transferred to the acceptor end of tRNA(Glu). In Streptococcus mutans serotype c (strain ATCC 700610 / UA159), this protein is Glutamate--tRNA ligase.